A 154-amino-acid chain; its full sequence is 6,7-dimethyl-8-ribityllumazine synthase (154 aa).

5-amino-6-(D-ribitylamino)uracil is bound by residues Phe22, 57–59 (AYE), and 81–83 (AVI). (2S)-2-hydroxy-3-oxobutyl phosphate is bound at residue 86 to 87 (GT). Catalysis depends on His89, which acts as the Proton donor. Phe114 is a binding site for 5-amino-6-(D-ribitylamino)uracil. Arg128 lines the (2S)-2-hydroxy-3-oxobutyl phosphate pocket.

Belongs to the DMRL synthase family. In terms of assembly, forms an icosahedral capsid composed of 60 subunits, arranged as a dodecamer of pentamers.

It catalyses the reaction (2S)-2-hydroxy-3-oxobutyl phosphate + 5-amino-6-(D-ribitylamino)uracil = 6,7-dimethyl-8-(1-D-ribityl)lumazine + phosphate + 2 H2O + H(+). The protein operates within cofactor biosynthesis; riboflavin biosynthesis; riboflavin from 2-hydroxy-3-oxobutyl phosphate and 5-amino-6-(D-ribitylamino)uracil: step 1/2. In terms of biological role, catalyzes the formation of 6,7-dimethyl-8-ribityllumazine by condensation of 5-amino-6-(D-ribitylamino)uracil with 3,4-dihydroxy-2-butanone 4-phosphate. This is the penultimate step in the biosynthesis of riboflavin. This Idiomarina loihiensis (strain ATCC BAA-735 / DSM 15497 / L2-TR) protein is 6,7-dimethyl-8-ribityllumazine synthase.